The chain runs to 440 residues: Ribosomal protein uS12 methylthiotransferase RimO (440 aa).

The region spanning 6 to 116 (PKVGFVSLGC…VVTAVHEVVP (111 aa)) is the MTTase N-terminal domain. Positions 15, 51, 80, 149, 153, and 156 each coordinate [4Fe-4S] cluster. The Radical SAM core domain occupies 135-373 (LTPRHYAYLK…MAHQQAISAA (239 aa)). A TRAM domain is found at 376–440 (QLKVGKEIEV…DEYDLWAEPV (65 aa)).

It belongs to the methylthiotransferase family. RimO subfamily. The cofactor is [4Fe-4S] cluster.

The protein resides in the cytoplasm. The catalysed reaction is L-aspartate(89)-[ribosomal protein uS12]-hydrogen + (sulfur carrier)-SH + AH2 + 2 S-adenosyl-L-methionine = 3-methylsulfanyl-L-aspartate(89)-[ribosomal protein uS12]-hydrogen + (sulfur carrier)-H + 5'-deoxyadenosine + L-methionine + A + S-adenosyl-L-homocysteine + 2 H(+). Catalyzes the methylthiolation of an aspartic acid residue of ribosomal protein uS12. The protein is Ribosomal protein uS12 methylthiotransferase RimO of Pseudomonas paraeruginosa (strain DSM 24068 / PA7) (Pseudomonas aeruginosa (strain PA7)).